The sequence spans 714 residues: Fatty acid oxidation complex subunit alpha (714 aa).

The interval 1-190 is enoyl-CoA hydratase; sequence MEMASVFTLN…KLGLVDDVVP (190 aa). Residues 306–714 form a 3-hydroxyacyl-CoA dehydrogenase region; that stretch reads APLNSVGILG…FWKTTATDLQ (409 aa).

The protein in the N-terminal section; belongs to the enoyl-CoA hydratase/isomerase family. This sequence in the central section; belongs to the 3-hydroxyacyl-CoA dehydrogenase family. In terms of assembly, heterotetramer of two alpha chains (FadJ) and two beta chains (FadI).

Its subcellular location is the cytoplasm. It carries out the reaction a (3S)-3-hydroxyacyl-CoA = a (2E)-enoyl-CoA + H2O. It catalyses the reaction a 4-saturated-(3S)-3-hydroxyacyl-CoA = a (3E)-enoyl-CoA + H2O. The enzyme catalyses a (3S)-3-hydroxyacyl-CoA + NAD(+) = a 3-oxoacyl-CoA + NADH + H(+). The catalysed reaction is (3S)-3-hydroxybutanoyl-CoA = (3R)-3-hydroxybutanoyl-CoA. The protein operates within lipid metabolism; fatty acid beta-oxidation. Functionally, catalyzes the formation of a hydroxyacyl-CoA by addition of water on enoyl-CoA. Also exhibits 3-hydroxyacyl-CoA epimerase and 3-hydroxyacyl-CoA dehydrogenase activities. This Escherichia coli (strain SE11) protein is Fatty acid oxidation complex subunit alpha.